The following is a 315-amino-acid chain: tRNA dimethylallyltransferase (315 aa).

14–21 (GATATGKS) is an ATP binding site. Residue 16–21 (TATGKS) participates in substrate binding. Residues 39-42 (DSRQ) form an interaction with substrate tRNA region.

The protein belongs to the IPP transferase family. As to quaternary structure, monomer. It depends on Mg(2+) as a cofactor.

The enzyme catalyses adenosine(37) in tRNA + dimethylallyl diphosphate = N(6)-dimethylallyladenosine(37) in tRNA + diphosphate. Its function is as follows. Catalyzes the transfer of a dimethylallyl group onto the adenine at position 37 in tRNAs that read codons beginning with uridine, leading to the formation of N6-(dimethylallyl)adenosine (i(6)A). The protein is tRNA dimethylallyltransferase of Microcystis aeruginosa (strain NIES-843 / IAM M-2473).